Here is a 489-residue protein sequence, read N- to C-terminus: Ribulose bisphosphate carboxylase large chain (489 aa).

The substrate site is built by N128 and T178. The active-site Proton acceptor is the K180. Residue K182 coordinates substrate. The Mg(2+) site is built by K206, D208, and E209. An N6-carboxylysine modification is found at K206. Catalysis depends on H298, which acts as the Proton acceptor. Residues R299, H331, and S383 each contribute to the substrate site.

It belongs to the RuBisCO large chain family. Type I subfamily. In terms of assembly, heterohexadecamer of 8 large chains and 8 small chains. It depends on Mg(2+) as a cofactor.

It catalyses the reaction 2 (2R)-3-phosphoglycerate + 2 H(+) = D-ribulose 1,5-bisphosphate + CO2 + H2O. It carries out the reaction D-ribulose 1,5-bisphosphate + O2 = 2-phosphoglycolate + (2R)-3-phosphoglycerate + 2 H(+). In terms of biological role, ruBisCO catalyzes two reactions: the carboxylation of D-ribulose 1,5-bisphosphate, the primary event in carbon dioxide fixation, as well as the oxidative fragmentation of the pentose substrate. Both reactions occur simultaneously and in competition at the same active site. This chain is Ribulose bisphosphate carboxylase large chain, found in Nitrosospira multiformis (strain ATCC 25196 / NCIMB 11849 / C 71).